A 236-amino-acid chain; its full sequence is Probable fimbrial chaperone EcpE (236 aa).

The N-terminal stretch at 1-27 (MFRRRGVTLTKALLTAVCMLAAPLTQA) is a signal peptide.

It belongs to the EcpB/EcpE family.

Part of the ecpRABCDE operon, which encodes the E.coli common pilus (ECP). ECP is found in both commensal and pathogenic strains and plays a dual role in early-stage biofilm development and host cell recognition. The polypeptide is Probable fimbrial chaperone EcpE (ecpE) (Escherichia coli (strain K12)).